Reading from the N-terminus, the 513-residue chain is Interferon-induced, double-stranded RNA-activated protein kinase (513 aa).

Residue A2 is modified to N-acetylalanine. The DRBM 1 domain maps to F8 to N76. A Glycyl lysine isopeptide (Lys-Gly) (interchain with G-Cter in ISG15) cross-link involves residue K68. At S82 the chain carries Phosphoserine. Position 84 is a phosphothreonine (T84). Residues N95 to E162 form the DRBM 2 domain. Phosphotyrosine; by autocatalysis is present on Y96. Residue K154 forms a Glycyl lysine isopeptide (Lys-Gly) (interchain with G-Cter in ISG15) linkage. Y157 bears the Phosphotyrosine; by autocatalysis mark. Residue T227 is modified to Phosphothreonine. Positions D235–C513 are interaction with TRAF5. A Protein kinase domain is found at F236–K502. I242 to V250 contacts ATP. Y262 bears the Phosphotyrosine; by autocatalysis mark. K265 provides a ligand contact to ATP. D373 functions as the Proton acceptor in the catalytic mechanism. Phosphothreonine; by autocatalysis occurs at positions 406 and 411. S416 is modified (phosphoserine).

Belongs to the protein kinase superfamily. Ser/Thr protein kinase family. GCN2 subfamily. As to quaternary structure, homodimer. Interacts with DNAJC3. Interacts with STRBP. Forms a complex with FANCA, FANCC, FANCG and HSP70. Interacts with ADAR/ADAR1. The inactive form interacts with NCK1 and GSN. Interacts (via the kinase catalytic domain) with STAT3 (via SH2 domain), TRAF2 (C-terminus), TRAF5 (C-terminus) and TRAF6 (C-terminus). Interacts with MAP2K6, IKBKB/IKKB, IRS1, NPM1, TARBP2, NLRP1, NLRP3, NLRC4 and AIM2. Interacts (via DRBM 1 domain) with DUS2L (via DRBM domain). Interacts with DHX9 (via N-terminus) and this interaction is dependent upon activation of the kinase. Post-translationally, autophosphorylated on several Ser, Thr and Tyr residues. Autophosphorylation of Thr-411 is dependent on Thr-406 and is stimulated by dsRNA binding and dimerization. Autophosphorylation apparently leads to the activation of the kinase. Tyrosine autophosphorylation is essential for efficient dsRNA-binding, dimerization, and kinase activation.

Its subcellular location is the cytoplasm. The protein localises to the nucleus. The protein resides in the perinuclear region. The catalysed reaction is L-seryl-[protein] + ATP = O-phospho-L-seryl-[protein] + ADP + H(+). The enzyme catalyses L-threonyl-[protein] + ATP = O-phospho-L-threonyl-[protein] + ADP + H(+). It catalyses the reaction L-tyrosyl-[protein] + ATP = O-phospho-L-tyrosyl-[protein] + ADP + H(+). With respect to regulation, initially produced in an inactive form and is activated by binding to viral dsRNA, which causes dimerization and autophosphorylation in the activation loop and stimulation of function. ISGylation can activate it in the absence of viral infection. Can also be activated by heparin, pro-inflammatory stimuli, growth factors, cytokines, oxidative stress and the cellular protein PRKRA. Activity is markedly stimulated by manganese ions. Activation is blocked by the cellular proteins TARBP2, DUS2L, NPM1, NCK1 and ADAR. Its function is as follows. IFN-induced dsRNA-dependent serine/threonine-protein kinase that phosphorylates the alpha subunit of eukaryotic translation initiation factor 2 (EIF2S1/eIF-2-alpha) and plays a key role in the innate immune response to viral infection. Inhibits viral replication via the integrated stress response (ISR): EIF2S1/eIF-2-alpha phosphorylation in response to viral infection converts EIF2S1/eIF-2-alpha in a global protein synthesis inhibitor, resulting to a shutdown of cellular and viral protein synthesis, while concomitantly initiating the preferential translation of ISR-specific mRNAs, such as the transcriptional activator ATF4. Exerts its antiviral activity on a wide range of DNA and RNA viruses. Also involved in the regulation of signal transduction, apoptosis, cell proliferation and differentiation: phosphorylates other substrates including p53/TP53, PPP2R5A, DHX9, ILF3 and IRS1. In addition to serine/threonine-protein kinase activity, also has tyrosine-protein kinase activity and phosphorylates CDK1 at 'Tyr-4' upon DNA damage, facilitating its ubiquitination and proteasomal degradation. Either as an adapter protein and/or via its kinase activity, can regulate various signaling pathways (p38 MAP kinase, NF-kappa-B and insulin signaling pathways) and transcription factors (JUN, STAT1, STAT3, IRF1, ATF3) involved in the expression of genes encoding pro-inflammatory cytokines and IFNs. Activates the NF-kappa-B pathway via interaction with IKBKB and TRAF family of proteins and activates the p38 MAP kinase pathway via interaction with MAP2K6. Can act as both a positive and negative regulator of the insulin signaling pathway (ISP). Negatively regulates ISP by inducing the inhibitory phosphorylation of insulin receptor substrate 1 (IRS1) at 'Ser-312' and positively regulates ISP via phosphorylation of PPP2R5A which activates FOXO1, which in turn up-regulates the expression of insulin receptor substrate 2 (IRS2). Can regulate NLRP3 inflammasome assembly and the activation of NLRP3, NLRP1, AIM2 and NLRC4 inflammasomes. Plays a role in the regulation of the cytoskeleton by binding to gelsolin (GSN), sequestering the protein in an inactive conformation away from actin. The chain is Interferon-induced, double-stranded RNA-activated protein kinase (Eif2ak2) from Rattus norvegicus (Rat).